The chain runs to 200 residues: Elongation factor Ts (200 aa).

Residues 81–84 are involved in Mg(2+) ion dislocation from EF-Tu; it reads TDFV.

It belongs to the EF-Ts family.

The protein resides in the cytoplasm. In terms of biological role, associates with the EF-Tu.GDP complex and induces the exchange of GDP to GTP. It remains bound to the aminoacyl-tRNA.EF-Tu.GTP complex up to the GTP hydrolysis stage on the ribosome. The chain is Elongation factor Ts from Nitratidesulfovibrio vulgaris (strain DSM 19637 / Miyazaki F) (Desulfovibrio vulgaris).